Here is a 368-residue protein sequence, read N- to C-terminus: Anhydro-N-acetylmuramic acid kinase (368 aa).

13-20 serves as a coordination point for ATP; it reads GTSLDGVD.

It belongs to the anhydro-N-acetylmuramic acid kinase family.

It catalyses the reaction 1,6-anhydro-N-acetyl-beta-muramate + ATP + H2O = N-acetyl-D-muramate 6-phosphate + ADP + H(+). Its pathway is amino-sugar metabolism; 1,6-anhydro-N-acetylmuramate degradation. It functions in the pathway cell wall biogenesis; peptidoglycan recycling. In terms of biological role, catalyzes the specific phosphorylation of 1,6-anhydro-N-acetylmuramic acid (anhMurNAc) with the simultaneous cleavage of the 1,6-anhydro ring, generating MurNAc-6-P. Is required for the utilization of anhMurNAc either imported from the medium or derived from its own cell wall murein, and thus plays a role in cell wall recycling. In Hahella chejuensis (strain KCTC 2396), this protein is Anhydro-N-acetylmuramic acid kinase.